The chain runs to 127 residues: Aspartate 1-decarboxylase (127 aa).

Ser-25 acts as the Schiff-base intermediate with substrate; via pyruvic acid in catalysis. Ser-25 bears the Pyruvic acid (Ser) mark. Thr-57 contributes to the substrate binding site. Tyr-58 serves as the catalytic Proton donor. A substrate-binding site is contributed by 73–75 (GAA).

Belongs to the PanD family. As to quaternary structure, heterooctamer of four alpha and four beta subunits. The cofactor is pyruvate. Is synthesized initially as an inactive proenzyme, which is activated by self-cleavage at a specific serine bond to produce a beta-subunit with a hydroxyl group at its C-terminus and an alpha-subunit with a pyruvoyl group at its N-terminus.

The protein resides in the cytoplasm. The catalysed reaction is L-aspartate + H(+) = beta-alanine + CO2. It functions in the pathway cofactor biosynthesis; (R)-pantothenate biosynthesis; beta-alanine from L-aspartate: step 1/1. Functionally, catalyzes the pyruvoyl-dependent decarboxylation of aspartate to produce beta-alanine. The protein is Aspartate 1-decarboxylase of Exiguobacterium sibiricum (strain DSM 17290 / CCUG 55495 / CIP 109462 / JCM 13490 / 255-15).